The following is a 596-amino-acid chain: Protein NRT1/ PTR FAMILY 3.1 (596 aa).

Residues 1–16 (MEEQSKNKISEEEKQL) are compositionally biased toward basic and acidic residues. Residues 1–23 (MEEQSKNKISEEEKQLHGRPNRP) are disordered. The next 12 membrane-spanning stretches (helical) occupy residues 27–47 (LITMPFIFANEICEKLAVVGF), 73–93 (FAGTSSLTPLLGAFIADSFAG), 98–118 (ITFASIIYQIGMTLLTISAII), 137–157 (TAQLSILYVALLLGALGSGGI), 185–205 (NWYYFCMGAAVLLAVTVLVWI), 213–233 (LGLGIPTVAMFLSVIAFVGGF), 334–354 (MGPIGASGILLITAYAQQGTF), 372–392 (IPAGSMSVFTTVAMLTTIIFY), 416–436 (MGIGFVISIIATLVAGFVEVK), 453–473 (IVPISFLWLIPQYGLHGVAEA), 497–517 (ALFWMAISIGNYVSTLLVTLV), and 542–562 (YFYWLITVLQAVNLVYYLWCA).

It belongs to the major facilitator superfamily. Proton-dependent oligopeptide transporter (POT/PTR) (TC 2.A.17) family. As to expression, expressed in shoots, stems, leaves, flowers and siliques.

Its subcellular location is the membrane. May act as an efflux-type nitrite transporter. Not regulated by the PII protein involved in the regulation of nitrite uptake into higher plant chloroplasts. The polypeptide is Protein NRT1/ PTR FAMILY 3.1 (NPF3.1) (Arabidopsis thaliana (Mouse-ear cress)).